A 489-amino-acid polypeptide reads, in one-letter code: Betaine aldehyde dehydrogenase (489 aa).

K(+) is bound by residues T26 and D93. 150 to 152 provides a ligand contact to NAD(+); the sequence is GAW. Catalysis depends on K162, which acts as the Charge relay system. Residue 176-179 coordinates NAD(+); that stretch reads KPSE. V180 contacts K(+). Position 229 to 232 (229 to 232) interacts with NAD(+); the sequence is GVET. L245 contributes to the K(+) binding site. Residue E251 is the Proton acceptor of the active site. NAD(+)-binding residues include G253, C285, and E386. C285 functions as the Nucleophile in the catalytic mechanism. Residue C285 is modified to Cysteine sulfenic acid (-SOH). 2 residues coordinate K(+): K456 and G459. E463 acts as the Charge relay system in catalysis.

The protein belongs to the aldehyde dehydrogenase family. In terms of assembly, dimer of dimers. It depends on K(+) as a cofactor.

The catalysed reaction is betaine aldehyde + NAD(+) + H2O = glycine betaine + NADH + 2 H(+). It functions in the pathway amine and polyamine biosynthesis; betaine biosynthesis via choline pathway; betaine from betaine aldehyde: step 1/1. In terms of biological role, involved in the biosynthesis of the osmoprotectant glycine betaine. Catalyzes the irreversible oxidation of betaine aldehyde to the corresponding acid. The polypeptide is Betaine aldehyde dehydrogenase (Burkholderia ambifaria (strain MC40-6)).